The primary structure comprises 278 residues: MGCCGCSGGCGSSCGGCGSGCGGCGSGCGGCGSGCGGSGSSCCVPVCCCKPVCCRVPTCSCSSCGKGGCGSSGGSKGGCGSCGGCKGGCGSCGGSKGGCGSCGGSKGGCGSCGGSKGGCGSGCGGCGSSCCVPVCCCKPMCCCVPACSCSSCGKGGCGSCGCSKGACGSCGGSKGGCGSCGGCKGGCGSCGGSKGGCGSGCGGCGSGCGVPVCCCSCSSCGSCAGSKGGCGSSCSQCSCCKPCCCSSGCGSSCCQSSCCKPCCSQSSCCVPVCCQCKI.

A run of 8 repeats spans residues 42 to 45 (CCVP), 48 to 51 (CCKP), 130 to 133 (CCVP), 136 to 139 (CCKP), 142 to 145 (CCVP), 239 to 242 (CCKP), 258 to 261 (CCKP), and 268 to 271 (CCVP). The segment at 42 to 271 (CCVPVCCCKP…CCSQSSCCVP (230 aa)) is 8 X 4 AA repeats of C-C-X-P.

This sequence belongs to the KRTAP type 5 family. As to quaternary structure, interacts with hair keratins. Expressed in hair root but not in skin. Expressed also in lung, pancreas, ovary, testis.

Functionally, in the hair cortex, hair keratin intermediate filaments are embedded in an interfilamentous matrix, consisting of hair keratin-associated protein (KRTAP), which are essential for the formation of a rigid and resistant hair shaft through their extensive disulfide bond cross-linking with abundant cysteine residues of hair keratins. The matrix proteins include the high-sulfur and high-glycine-tyrosine keratins. The protein is Keratin-associated protein 5-1 (KRTAP5-1) of Homo sapiens (Human).